A 377-amino-acid polypeptide reads, in one-letter code: Prostaglandin reductase-3 (377 aa).

An N6-acetyllysine modification is found at Lys35. Residues Thr185, Ser205, Lys209, Tyr224, Ser247, Ile269, and Tyr275 each contribute to the NADP(+) site. A Phosphoserine modification is found at Ser299. NADP(+) contacts are provided by residues 303 to 305 (FFL) and Asn361.

The protein belongs to the zinc-containing alcohol dehydrogenase family. Quinone oxidoreductase subfamily.

The protein localises to the peroxisome. It carries out the reaction 13,14-dihydro-15-oxo-prostaglandin E2 + NADP(+) = 15-oxoprostaglandin E2 + NADPH + H(+). The enzyme catalyses 13,14-dihydro-15-oxo-prostaglandin E1 + NADP(+) = 15-oxoprostaglandin E1 + NADPH + H(+). It catalyses the reaction 13,14-dihydro-15-oxo-PGF2alpha + NADP(+) = 15-oxoprostaglandin F2alpha + NADPH + H(+). The catalysed reaction is 13,14-dihydro-15-oxo-prostaglandin F1alpha + NADP(+) = 15-oxoprostaglandin F1alpha + NADPH + H(+). Its function is as follows. Functions as 15-oxo-prostaglandin 13-reductase and acts on 15-keto-PGE1, 15-keto-PGE2, 15-keto-PGE1-alpha and 15-keto-PGE2-alpha with highest efficiency towards 15-keto-PGE2-alpha. Overexpression represses transcriptional activity of PPARG and inhibits adipocyte differentiation. The sequence is that of Prostaglandin reductase-3 (PTGR3) from Bos taurus (Bovine).